The primary structure comprises 92 residues: MPRSLKKGPFVDEHLLNKVDAQNEKGTKQVIKTWSRRSTILPDFIGHTFAVHDGRKHVPVFIDDSMVGHKLGEFAPTKTFKGHVKDDMKGRR.

This sequence belongs to the universal ribosomal protein uS19 family.

Functionally, protein S19 forms a complex with S13 that binds strongly to the 16S ribosomal RNA. This chain is Small ribosomal subunit protein uS19, found in Corynebacterium urealyticum (strain ATCC 43042 / DSM 7109).